Here is a 408-residue protein sequence, read N- to C-terminus: Diguanylate cyclase DgcN (408 aa).

Residues 1–24 lie on the Cytoplasmic side of the membrane; sequence MMDNDNSLNKRPTFKRALRNISMT. The chain crosses the membrane as a helical span at residues 25–45; that stretch reads SIFITMMLIWLLLSVTSVLTL. The Periplasmic portion of the chain corresponds to 46 to 52; the sequence is KQYAQKN. A helical transmembrane segment spans residues 53–73; sequence LALTAATMTYSLEAAVVFADG. Residues 74-112 are Cytoplasmic-facing; the sequence is PAATETLAALGQQGQFSTAEVRDKQQNILASWHYTRKDP. The helical transmembrane segment at 113–133 threads the bilayer; the sequence is GDTFSNFISHWLFPAPIIQPI. Over 134–154 the chain is Periplasmic; the sequence is RHNGETIGEVRLTARDSSISH. Residues 155–175 traverse the membrane as a helical segment; it reads FIWFSLAVLTGCILLASGIAI. The Cytoplasmic portion of the chain corresponds to 176 to 408; it reads TLTRHLHNGL…KHQRAEKLVR (233 aa). The HAMP domain occupies 183–236; sequence NGLVEALKNITDVVHDVRSNRNFSRRVSEERIAEFHRFALDFNSLLDEMEEWQL. Positions 278-408 constitute a GGDEF domain; that stretch reads KTSALLFLDG…KHQRAEKLVR (131 aa). Residue Asp286 participates in Mg(2+) binding. Substrate-binding residues include Asn294, His299, and Asp303. Asp329 serves as a coordination point for Mg(2+). The active-site Proton acceptor is the Asp329.

As to quaternary structure, homodimer. Interacts with the cell division proteins FtsZ and ZipA. Requires Mg(2+) as cofactor.

The protein localises to the cell inner membrane. It carries out the reaction 2 GTP = 3',3'-c-di-GMP + 2 diphosphate. Its pathway is purine metabolism; 3',5'-cyclic di-GMP biosynthesis. Its activity is regulated as follows. Inhibited by YfiR, which prevents relocation to the midcell. A reductive stress signal is required to inactivate YfiR and turn on the DGC activity of DgcN. Its function is as follows. Bifunctional protein that catalyzes the synthesis of cyclic-di-GMP (c-di-GMP) in response to reductive stress and then dynamically relocates to the division site to arrest cell division in response to envelope stress. In the presence of high intracellular c-di-GMP levels, and in response to envelope stress, interacts with cell division proteins and halts cell division, without disassembling the Z ring, but by blocking its further progress toward cytokinesis. Part of a network that regulates cell motility by altering levels of c-di-GMP. The chain is Diguanylate cyclase DgcN from Escherichia coli (strain K12).